A 389-amino-acid polypeptide reads, in one-letter code: Lipid-A-disaccharide synthase (389 aa).

It belongs to the LpxB family.

It carries out the reaction a lipid X + a UDP-2-N,3-O-bis[(3R)-3-hydroxyacyl]-alpha-D-glucosamine = a lipid A disaccharide + UDP + H(+). Its pathway is bacterial outer membrane biogenesis; LPS lipid A biosynthesis. Functionally, condensation of UDP-2,3-diacylglucosamine and 2,3-diacylglucosamine-1-phosphate to form lipid A disaccharide, a precursor of lipid A, a phosphorylated glycolipid that anchors the lipopolysaccharide to the outer membrane of the cell. The polypeptide is Lipid-A-disaccharide synthase (Albidiferax ferrireducens (strain ATCC BAA-621 / DSM 15236 / T118) (Rhodoferax ferrireducens)).